Reading from the N-terminus, the 100-residue chain is Aspartyl/glutamyl-tRNA(Asn/Gln) amidotransferase subunit C (100 aa).

This sequence belongs to the GatC family. Heterotrimer of A, B and C subunits.

It catalyses the reaction L-glutamyl-tRNA(Gln) + L-glutamine + ATP + H2O = L-glutaminyl-tRNA(Gln) + L-glutamate + ADP + phosphate + H(+). The catalysed reaction is L-aspartyl-tRNA(Asn) + L-glutamine + ATP + H2O = L-asparaginyl-tRNA(Asn) + L-glutamate + ADP + phosphate + 2 H(+). Functionally, allows the formation of correctly charged Asn-tRNA(Asn) or Gln-tRNA(Gln) through the transamidation of misacylated Asp-tRNA(Asn) or Glu-tRNA(Gln) in organisms which lack either or both of asparaginyl-tRNA or glutaminyl-tRNA synthetases. The reaction takes place in the presence of glutamine and ATP through an activated phospho-Asp-tRNA(Asn) or phospho-Glu-tRNA(Gln). The sequence is that of Aspartyl/glutamyl-tRNA(Asn/Gln) amidotransferase subunit C from Streptococcus mutans serotype c (strain ATCC 700610 / UA159).